Reading from the N-terminus, the 615-residue chain is Integral inner nuclear membrane protein ima1 (615 aa).

A run of 3 helical transmembrane segments spans residues 192 to 212 (FVLW…SIVW), 247 to 267 (IFYF…WYKM), and 323 to 343 (QIHA…ISCL). The tract at residues 357–387 (ILKPRKKRQESTSSVHRIGKESSDRKDGISG) is disordered. Over residues 374–384 (IGKESSDRKDG) the composition is skewed to basic and acidic residues. Helical transmembrane passes span 563–583 (AKLL…GWRL) and 586–606 (FTMF…VMKH).

It is found in the nucleus inner membrane. Functionally, inner nuclear membrane protein that specifically binds to heterochromatic regions and promotes the tethering of centromeric DNA to the SUN-KASH complex. Couples centromeres to the nuclear envelope, thus contributing to their association with the microtubule organizing center attachment site and to the positioning of the nucleus at the cell center by microtubules. The sequence is that of Integral inner nuclear membrane protein ima1 (IMA1) from Schizosaccharomyces pombe (strain 972 / ATCC 24843) (Fission yeast).